The sequence spans 407 residues: Putative nickel insertion protein (407 aa).

It belongs to the LarC family.

In Gloeothece citriformis (strain PCC 7424) (Cyanothece sp. (strain PCC 7424)), this protein is Putative nickel insertion protein.